The chain runs to 467 residues: Colanic acid biosynthesis protein WcaM (467 aa).

The protein operates within slime biogenesis; slime polysaccharide biosynthesis. This Salmonella typhimurium (strain LT2 / SGSC1412 / ATCC 700720) protein is Colanic acid biosynthesis protein WcaM (wcaM).